We begin with the raw amino-acid sequence, 731 residues long: MSRSEKLTGEHLAPEPAEMARLVAGTHHNPHGILGAHEYGDHTVIRAFRPHAVEVVALVGKDRFSLQHLDSGLFAVALPFVDLIDYRLQVTYEGCEPHTVADAYRFLPTLGEVDLHLFAEGRHERLWEVLGAHPRSFTTADGVVSGVSFAVWAPNAKGVSLIGEFNGWNGHEAPMRVLGPSGVWELFWPDFPCDGLYKFRVHGADGVVTDRADPFAFGTEVPPQTASRVTSSDYTWGDDDWMAGRALRNPVNEAMSTYEVHLGSWRPGLSYRQLARELTDYIVDQGFTHVELLPVAEHPFAGSWGYQVTSYYAPTSRFGTPDDFRALVDALHQAGIGVIVDWVPAHFPKDAWALGRFDGTPLYEHSDPKRGEQLDWGTYVFDFGRPEVRNFLVANALYWLQEFHIDGLRVDAVASMLYLDYSRPEGGWTPNVHGGRENLEAVQFLQEMNATAHKVAPGIVTIAEESTSWPGVTRPTNIGGLGFSMKWNMGWMHDTLDYVSRDPVYRSYHHHEMTFSMLYAFSENYVLPLSHDEVVHGKGTLWGRMPGNNHVKAAGLRSLLAYQWAHPGKQLLFMGQEFGQRAEWSEQRGLDWFQLDENGFSNGIQRLVRDINDIYRCHPALWSLDTTPEGYSWIDANDSANNVLSFMRYGSDGSVLACVFNFAGAEHRDYRLGLPRAGRWREVLNTDATIYHGSGIGNLGGVDATDDPWHGRPASAVLVLPPTSALWLTPA.

Catalysis depends on Asp411, which acts as the Nucleophile. Glu464 (proton donor) is an active-site residue.

The protein belongs to the glycosyl hydrolase 13 family. GlgB subfamily. As to quaternary structure, monomer.

It carries out the reaction Transfers a segment of a (1-&gt;4)-alpha-D-glucan chain to a primary hydroxy group in a similar glucan chain.. It functions in the pathway glycan biosynthesis; glycogen biosynthesis. Its function is as follows. Catalyzes the formation of the alpha-1,6-glucosidic linkages in glycogen by scission of a 1,4-alpha-linked oligosaccharide from growing alpha-1,4-glucan chains and the subsequent attachment of the oligosaccharide to the alpha-1,6 position. The chain is 1,4-alpha-glucan branching enzyme GlgB from Mycobacterium bovis (strain ATCC BAA-935 / AF2122/97).